We begin with the raw amino-acid sequence, 369 residues long: C2 calcium-dependent domain-containing protein 4A (369 aa).

2 disordered regions span residues 151 to 176 and 197 to 240; these read PRAPGPATPAAPGCPRPPQDALARRP and RSRR…PFPE. The segment covering 153–168 has biased composition (pro residues); that stretch reads APGPATPAAPGCPRPP. Low complexity predominate over residues 220–237; sequence SQSPARAPSTSPPSSRVP. The C2 domain maps to 253–369; the sequence is AGDALRLAAE…ELSLGALLLL (117 aa).

This sequence belongs to the C2CD4 family. In terms of tissue distribution, specifically expressed in endothelial cells.

It localises to the nucleus. Its function is as follows. May be involved in inflammatory process. May regulate cell architecture and adhesion. This Homo sapiens (Human) protein is C2 calcium-dependent domain-containing protein 4A (C2CD4A).